Here is a 688-residue protein sequence, read N- to C-terminus: Translation initiation factor IF-2 (688 aa).

Positions 62 to 103 (EFEVEEKVVRSKKNSNKKKKKGKGNEDKRQDNFAGRQQTQIV) are disordered. A compositionally biased stretch (basic residues) spans 71–83 (RSKKNSNKKKKKG). The tr-type G domain maps to 190–359 (ERPAVVTIMG…LLVSEVEEYK (170 aa)). Residues 199–206 (GHVDHGKT) form a G1 region. 199-206 (GHVDHGKT) serves as a coordination point for GTP. Residues 224-228 (GITQH) are G2. The segment at 245-248 (DTPG) is G3. Residues 245–249 (DTPGH) and 299–302 (NKMD) each bind GTP. The segment at 299–302 (NKMD) is G4. A G5 region spans residues 335-337 (SAI).

It belongs to the TRAFAC class translation factor GTPase superfamily. Classic translation factor GTPase family. IF-2 subfamily.

The protein localises to the cytoplasm. Its function is as follows. One of the essential components for the initiation of protein synthesis. Protects formylmethionyl-tRNA from spontaneous hydrolysis and promotes its binding to the 30S ribosomal subunits. Also involved in the hydrolysis of GTP during the formation of the 70S ribosomal complex. The protein is Translation initiation factor IF-2 of Bacillus cereus (strain G9842).